The following is a 391-amino-acid chain: Thioredoxin-interacting protein (391 aa).

Lysine 212 is covalently cross-linked (Glycyl lysine isopeptide (Lys-Gly) (interchain with G-Cter in ubiquitin)). The residue at position 361 (serine 361) is a Phosphoserine.

Belongs to the arrestin family. In terms of assembly, homodimer; disulfide-linked. Interacts with TXN/thioredoxin through its redox-active site. Interacts with transcriptional repressors ZBTB16, ZBTB32 and HDAC1. Interacts with DDIT4. Ubiquitinated; undergoes heterotypic 'Lys-48'-/'Lys-63'-branched polyubiquitination catalyzed by ITCH and UBR5 resulting in proteasomal degradation. Deubiquitinated by USP5, leading to TXNIP stabilization.

It is found in the cytoplasm. May act as an oxidative stress mediator by inhibiting thioredoxin activity or by limiting its bioavailability. Interacts with COPS5 and restores COPS5-induced suppression of CDKN1B stability, blocking the COPS5-mediated translocation of CDKN1B from the nucleus to the cytoplasm. Functions as a transcriptional repressor, possibly by acting as a bridge molecule between transcription factors and corepressor complexes, and over-expression will induce G0/G1 cell cycle arrest. Required for the maturation of natural killer cells. Acts as a suppressor of tumor cell growth. Inhibits the proteasomal degradation of DDIT4, and thereby contributes to the inhibition of the mammalian target of rapamycin complex 1 (mTORC1). The chain is Thioredoxin-interacting protein (TXNIP) from Pongo abelii (Sumatran orangutan).